Reading from the N-terminus, the 271-residue chain is Imidazole glycerol phosphate synthase subunit HisF (271 aa).

Active-site residues include D12 and D131.

Belongs to the HisA/HisF family. As to quaternary structure, heterodimer of HisH and HisF.

Its subcellular location is the cytoplasm. The catalysed reaction is 5-[(5-phospho-1-deoxy-D-ribulos-1-ylimino)methylamino]-1-(5-phospho-beta-D-ribosyl)imidazole-4-carboxamide + L-glutamine = D-erythro-1-(imidazol-4-yl)glycerol 3-phosphate + 5-amino-1-(5-phospho-beta-D-ribosyl)imidazole-4-carboxamide + L-glutamate + H(+). It participates in amino-acid biosynthesis; L-histidine biosynthesis; L-histidine from 5-phospho-alpha-D-ribose 1-diphosphate: step 5/9. In terms of biological role, IGPS catalyzes the conversion of PRFAR and glutamine to IGP, AICAR and glutamate. The HisF subunit catalyzes the cyclization activity that produces IGP and AICAR from PRFAR using the ammonia provided by the HisH subunit. This chain is Imidazole glycerol phosphate synthase subunit HisF, found in Methanospirillum hungatei JF-1 (strain ATCC 27890 / DSM 864 / NBRC 100397 / JF-1).